Consider the following 704-residue polypeptide: Lebercilin (704 aa).

Residues 1-14 show a composition bias toward basic and acidic residues; the sequence is MGERARSPDIEQGK. Residues 1 to 80 form a disordered region; that stretch reads MGERARSPDI…VSPKAVPSKK (80 aa). At Ser-7 the chain carries Phosphoserine. The span at 25–40 shows a compositional bias: low complexity; sequence SSDLGSSPQSSGPSSP. Phosphoserine is present on Ser-48. A compositionally biased stretch (basic and acidic residues) spans 49 to 63; the sequence is TREKNPKRHLSDNQV. The stretch at 105 to 300 forms a coiled coil; that stretch reads KRVLSARLLK…KEKELDIKNI (196 aa). Disordered stretches follow at residues 389–417 and 476–661; these read QEGK…AREE and ELQD…GDEE. Residues 404–417 show a composition bias toward basic and acidic residues; the sequence is QEARKPESEWAREE. Residues 448–479 are a coiled coil; sequence AQSVDKFEDEAERLKTEMLLAKLNEINKELQD. The span at 496–505 shows a compositional bias: basic and acidic residues; that stretch reads SKLHSPDRST. The segment covering 570-591 has biased composition (polar residues); it reads GKSNPPSQKSSLLDFQSNSSES. Residues 592–608 are compositionally biased toward basic and acidic residues; the sequence is PSKDSLDLMSRKEKKAT. A compositionally biased stretch (low complexity) spans 617–627; that stretch reads SASNTSVSSKS.

It belongs to the LCA5 family. As to quaternary structure, interacts with NINL. Interacts with OFD1. Interacts with FAM161A. Interacts with components of the IFT complex B. Detected in several tissues.

It is found in the cytoplasm. It localises to the cytoskeleton. Its subcellular location is the cilium axoneme. The protein localises to the cilium basal body. The protein resides in the cell projection. It is found in the cilium. Its function is as follows. Involved in intraflagellar protein (IFT) transport in photoreceptor cilia. This chain is Lebercilin (Lca5), found in Mus musculus (Mouse).